The following is a 632-amino-acid chain: DNA topoisomerase 4 subunit B (632 aa).

Residues tyrosine 5, asparagine 42, aspartate 69, 110–116, and lysine 334 contribute to the ATP site; that span reads GLHGVGI. Positions 412–525 constitute a Toprim domain; the sequence is TELFLVEGDS…DGHVYVAMPP (114 aa). Mg(2+) contacts are provided by glutamate 418, aspartate 490, and aspartate 492.

It belongs to the type II topoisomerase family. ParE type 1 subfamily. As to quaternary structure, heterotetramer composed of ParC and ParE. Mg(2+) is required as a cofactor. It depends on Mn(2+) as a cofactor. Ca(2+) serves as cofactor.

It catalyses the reaction ATP-dependent breakage, passage and rejoining of double-stranded DNA.. Its function is as follows. Topoisomerase IV is essential for chromosome segregation. It relaxes supercoiled DNA. Performs the decatenation events required during the replication of a circular DNA molecule. The chain is DNA topoisomerase 4 subunit B from Haemophilus influenzae (strain ATCC 51907 / DSM 11121 / KW20 / Rd).